The chain runs to 556 residues: 3-phosphoinositide-dependent protein kinase 1 (556 aa).

Tyr9 carries the post-translational modification Phosphotyrosine; by SRC and INSR. Ser25 is subject to Phosphoserine. The tract at residues 26 to 80 (PSMVRTQTESSTPPGIPGGSRQGPAMDGTAAEPRPGAGSLQHAQPPPQPRKKRPE) is disordered. The span at 28–38 (MVRTQTESSTP) shows a compositional bias: polar residues. Residues 82 to 342 (FKFGKILGEG…YGPLKAHPFF (261 aa)) form the Protein kinase domain. ATP is bound by residues 92–94 (SFS) and Lys111. The tract at residues 113-157 (LEKRHIIKENKVPYVTRERDVMSRLDHPFFVKLYFTFQDDEKLYF) is PIF-pocket. Residues 160-162 (SYA) and Glu166 each bind ATP. Asp205 acts as the Proton acceptor in catalysis. ATP contacts are provided by Glu209 and Asp223. Ser241 carries the phosphoserine; by autocatalysis modification. The residue at position 304 (Lys304) is an N6-acetyllysine. Residue Thr354 is modified to Phosphothreonine; by MELK. Phosphotyrosine; by SRC and INSR is present on residues Tyr373 and Tyr376. Ser393 carries the phosphoserine modification. Ser394 is subject to Phosphoserine; by MAP3K5. Phosphoserine is present on Ser396. Ser398 is modified (phosphoserine; by MAP3K5). Position 410 is a phosphoserine (Ser410). Positions 459 to 550 (KMGPVDKRKG…EVWRQRYQSH (92 aa)) constitute a PH domain. Ser501 is modified (phosphoserine; by PKC/PRKCQ). Thr513 is subject to Phosphothreonine; by autocatalysis. Ser529 is subject to Phosphoserine; by PKC/PRKCQ.

The protein belongs to the protein kinase superfamily. AGC Ser/Thr protein kinase family. PDPK1 subfamily. In terms of assembly, homodimer in its autoinhibited state. Active as monomer. Interacts with NPRL2, PPARG, PAK1, PTK2B, GRB14, PKN1 (via C-terminus), STRAP and IKKB. The Tyr-9 phosphorylated form interacts with SRC, RASA1 and CRK (via their SH2 domains). Interacts with SGK3 in a phosphorylation-dependent manner. The tyrosine-phosphorylated form interacts with PTPN6. The Ser-241 phosphorylated form interacts with YWHAH and YWHAQ. Binds INSR in response to insulin. Interacts (via PH domain) with SMAD3, SMAD4 and SMAD7. Interacts with PKN2; the interaction stimulates PDPK1 autophosphorylation, its PI(3,4,5)P3-dependent kinase activity toward 'Ser-473' of AKT1 but also activates its kinase activity toward PRKCD and PRKCZ. Phosphorylation on Ser-241 in the activation loop is required for full activity. PDPK1 itself can autophosphorylate Ser-241, leading to its own activation. Autophosphorylation is inhibited by the apoptotic C-terminus cleavage product of PKN2. Tyr-9 phosphorylation is critical for stabilization of both PDPK1 and the PDPK1/SRC complex via HSP90-mediated protection of PDPK1 degradation. Angiotensin II stimulates the tyrosine phosphorylation of PDPK1 in vascular smooth muscle in a calcium- and SRC-dependent manner. Phosphorylated on Tyr-9, Tyr-373 and Tyr-376 by INSR in response to insulin. Palmitate negatively regulates autophosphorylation at Ser-241 and palmitate-induced phosphorylation at Ser-529 and Ser-501 by PKC/PRKCQ negatively regulates its ability to phosphorylate PKB/AKT1. Phosphorylation at Thr-354 by MELK partially inhibits kinase activity, the inhibition is cooperatively enhanced by phosphorylation at Ser-394 and Ser-398 by MAP3K5. In terms of processing, autophosphorylated; autophosphorylation is inhibited by the apoptotic C-terminus cleavage product of PKN2. Post-translationally, monoubiquitinated in the kinase domain, deubiquitinated by USP4. In terms of tissue distribution, appears to be expressed ubiquitously. The Tyr-9 phosphorylated form is markedly increased in diseased tissue compared with normal tissue from lung, liver, colon and breast.

The protein resides in the cytoplasm. It is found in the nucleus. The protein localises to the cell membrane. It localises to the cell junction. Its subcellular location is the focal adhesion. The catalysed reaction is L-seryl-[protein] + ATP = O-phospho-L-seryl-[protein] + ADP + H(+). The enzyme catalyses L-threonyl-[protein] + ATP = O-phospho-L-threonyl-[protein] + ADP + H(+). Its activity is regulated as follows. Homodimerization regulates its activity by maintaining the kinase in an autoinhibitory conformation. NPRL2 down-regulates its activity by interfering with tyrosine phosphorylation at the Tyr-9, Tyr-373 and Tyr-376 residues. The 14-3-3 protein YWHAQ acts as a negative regulator by association with the residues surrounding the Ser-241 residue. STRAP positively regulates its activity by enhancing its autophosphorylation and by stimulating its dissociation from YWHAQ. SMAD2, SMAD3, SMAD4 and SMAD7 also positively regulate its activity by stimulating its dissociation from YWHAQ. Activated by phosphorylation on Tyr-9, Tyr-373 and Tyr-376 by INSR in response to insulin. In terms of biological role, serine/threonine kinase which acts as a master kinase, phosphorylating and activating a subgroup of the AGC family of protein kinases. Its targets include: protein kinase B (PKB/AKT1, PKB/AKT2, PKB/AKT3), p70 ribosomal protein S6 kinase (RPS6KB1), p90 ribosomal protein S6 kinase (RPS6KA1, RPS6KA2 and RPS6KA3), cyclic AMP-dependent protein kinase (PRKACA), protein kinase C (PRKCD and PRKCZ), serum and glucocorticoid-inducible kinase (SGK1, SGK2 and SGK3), p21-activated kinase-1 (PAK1), TSSK3, protein kinase PKN (PKN1 and PKN2). Plays a central role in the transduction of signals from insulin by providing the activating phosphorylation to PKB/AKT1, thus propagating the signal to downstream targets controlling cell proliferation and survival, as well as glucose and amino acid uptake and storage. Negatively regulates the TGF-beta-induced signaling by: modulating the association of SMAD3 and SMAD7 with TGF-beta receptor, phosphorylating SMAD2, SMAD3, SMAD4 and SMAD7, preventing the nuclear translocation of SMAD3 and SMAD4 and the translocation of SMAD7 from the nucleus to the cytoplasm in response to TGF-beta. Activates PPARG transcriptional activity and promotes adipocyte differentiation. Activates the NF-kappa-B pathway via phosphorylation of IKKB. The tyrosine phosphorylated form is crucial for the regulation of focal adhesions by angiotensin II. Controls proliferation, survival, and growth of developing pancreatic cells. Participates in the regulation of Ca(2+) entry and Ca(2+)-activated K(+) channels of mast cells. Essential for the motility of vascular endothelial cells (ECs) and is involved in the regulation of their chemotaxis. Plays a critical role in cardiac homeostasis by serving as a dual effector for cell survival and beta-adrenergic response. Plays an important role during thymocyte development by regulating the expression of key nutrient receptors on the surface of pre-T cells and mediating Notch-induced cell growth and proliferative responses. Provides negative feedback inhibition to toll-like receptor-mediated NF-kappa-B activation in macrophages. Catalytically inactive. The sequence is that of 3-phosphoinositide-dependent protein kinase 1 (PDPK1) from Homo sapiens (Human).